The following is a 554-amino-acid chain: Intraflagellar transport protein 56 (554 aa).

The disordered stretch occupies residues 1 to 24 (MMLSRAKPAVGRGVQHTDKRKKKG). TPR repeat units follow at residues 57–90 (EDTN…ENCN), 92–125 (EVWV…LQNR), 151–184 (TEDQ…NREY), and 468–501 (ANDC…EGKR).

This sequence belongs to the IFT56 family. Component of the IFT complex B. Interacts with IFT46; the interaction is direct.

The protein localises to the cell projection. It localises to the cilium. Component of the intraflagellar transport (IFT) complex B required for transport of proteins in the motile cilium. Required for transport of specific ciliary cargo proteins related to motility, while it is neither required for IFT complex B assembly or motion nor for cilium assembly. Required for efficient coupling between the accumulation of GLI2 and GLI3 at the ciliary tips and their dissociation from the negative regulator SUFU. Plays a key role in maintaining the integrity of the IFT complex B and the proper ciliary localization of the IFT complex B components. Not required for IFT complex A ciliary localization or function. Essential for maintaining proper microtubule organization within the ciliary axoneme. This is Intraflagellar transport protein 56 from Homo sapiens (Human).